Here is a 361-residue protein sequence, read N- to C-terminus: Isopentenyl-diphosphate delta-isomerase (361 aa).

12–13 (RK) contacts substrate. Residues S70, 71–73 (SMT), S101, and N130 each bind FMN. 101 to 103 (SMR) provides a ligand contact to substrate. Q165 serves as a coordination point for substrate. E166 lines the Mg(2+) pocket. FMN contacts are provided by residues K197 and 310–311 (AG).

This sequence belongs to the IPP isomerase type 2 family. In terms of assembly, homooctamer. Dimer of tetramers. Requires FMN as cofactor. It depends on NADPH as a cofactor. Mg(2+) serves as cofactor.

The protein localises to the cytoplasm. The catalysed reaction is isopentenyl diphosphate = dimethylallyl diphosphate. Its function is as follows. Involved in the biosynthesis of isoprenoids. Catalyzes the 1,3-allylic rearrangement of the homoallylic substrate isopentenyl (IPP) to its allylic isomer, dimethylallyl diphosphate (DMAPP). This Chlorobium luteolum (strain DSM 273 / BCRC 81028 / 2530) (Pelodictyon luteolum) protein is Isopentenyl-diphosphate delta-isomerase.